Consider the following 349-residue polypeptide: PDZ and LIM domain protein 2 (349 aa).

A PDZ domain is found at 1–84 (MALTVNVVGP…PLRLQLDRSQ (84 aa)). 2 disordered regions span residues 72-95 (SASPLRLQLDRSQTASPGQINGEG) and 108-147 (LRTHHNSQSSQRSACFSPASLSPRPDSPFSTPPPTSPIAL). Polar residues-rich tracts occupy residues 81–90 (DRSQTASPGQ) and 108–121 (LRTHHNSQSSQRSA). A phosphoserine mark is found at Ser-124, Ser-127, Ser-129, Ser-134, and Ser-137. 2 positions are modified to phosphothreonine: Thr-138 and Thr-142. 2 positions are modified to phosphoserine: Ser-143 and Ser-163. Disordered regions lie at residues 168 to 212 (ATHH…SSLD) and 250 to 272 (ERGGTPAFVPSSLSPKASLPTSR). Over residues 176 to 192 (GQPTSQQAGHSSPSDST) the composition is skewed to polar residues. A phosphoserine mark is found at Ser-199, Ser-204, Ser-205, Ser-209, Ser-210, and Ser-263. The segment covering 199–211 (SPGRPSSPRLSSL) has biased composition (low complexity). Residues 260-270 (SSLSPKASLPT) show a composition bias toward polar residues. One can recognise an LIM zinc-binding domain in the interval 281-341 (HTCEKCSVNI…EKHARQRYSM (61 aa)).

In terms of assembly, interacts with alpha-actinins ACTN1 and ACTN4, FLNA and MYH9. Interacts (via LIM zinc-binding domain) with MKRN2. In terms of tissue distribution, highly expressed in cornea and lung. Expressed at intermediate level in sclera and combined tissues of the eye irido-corneal angle. Specifically expressed in the corneal epithelial cells but not in other corneal layers.

It is found in the cytoplasm. The protein resides in the cytoskeleton. Probable adapter protein located at the actin cytoskeleton that promotes cell attachment. Necessary for the migratory capacity of epithelial cells. Overexpression enhances cell adhesion to collagen and fibronectin and suppresses anchorage independent growth. May contribute to tumor cell migratory capacity. This chain is PDZ and LIM domain protein 2 (Pdlim2), found in Rattus norvegicus (Rat).